The chain runs to 398 residues: S-adenosylmethionine synthase (398 aa).

His-17 is a binding site for ATP. Asp-19 lines the Mg(2+) pocket. Glu-45 is a K(+) binding site. Residues Glu-58 and Gln-101 each coordinate L-methionine. The segment at 101-111 (QSPDIAQGVDK) is flexible loop. Residues 176–178 (DGK), 243–244 (RF), Asp-252, 258–259 (RK), and Lys-279 contribute to the ATP site. Asp-252 serves as a coordination point for L-methionine. Position 283 (Lys-283) interacts with L-methionine.

It belongs to the AdoMet synthase family. As to quaternary structure, homotetramer; dimer of dimers. Mg(2+) serves as cofactor. Requires K(+) as cofactor.

The protein localises to the cytoplasm. The catalysed reaction is L-methionine + ATP + H2O = S-adenosyl-L-methionine + phosphate + diphosphate. The protein operates within amino-acid biosynthesis; S-adenosyl-L-methionine biosynthesis; S-adenosyl-L-methionine from L-methionine: step 1/1. Catalyzes the formation of S-adenosylmethionine (AdoMet) from methionine and ATP. The overall synthetic reaction is composed of two sequential steps, AdoMet formation and the subsequent tripolyphosphate hydrolysis which occurs prior to release of AdoMet from the enzyme. In Staphylococcus haemolyticus (strain JCSC1435), this protein is S-adenosylmethionine synthase.